Reading from the N-terminus, the 304-residue chain is 4-diphosphocytidyl-2-C-methyl-D-erythritol kinase (304 aa).

K18 is a catalytic residue. Residue 103–113 (PVAAGIGGGSA) coordinates ATP. Residue D145 is part of the active site.

The protein belongs to the GHMP kinase family. IspE subfamily.

It carries out the reaction 4-CDP-2-C-methyl-D-erythritol + ATP = 4-CDP-2-C-methyl-D-erythritol 2-phosphate + ADP + H(+). It functions in the pathway isoprenoid biosynthesis; isopentenyl diphosphate biosynthesis via DXP pathway; isopentenyl diphosphate from 1-deoxy-D-xylulose 5-phosphate: step 3/6. Catalyzes the phosphorylation of the position 2 hydroxy group of 4-diphosphocytidyl-2C-methyl-D-erythritol. The sequence is that of 4-diphosphocytidyl-2-C-methyl-D-erythritol kinase from Rhodospirillum rubrum (strain ATCC 11170 / ATH 1.1.1 / DSM 467 / LMG 4362 / NCIMB 8255 / S1).